The sequence spans 283 residues: MEQKIVNIGDIQVANDKPFTLFAGMNVLESRDLAMQICEHYVKVTDKLGIPYVFKASFDKANRSSVHSYRGPGLEEGMKIFQELKDTFGVKIITDVHTEAQAQPVADVVDVIQLPAFLARQTDLVEAMAKTGAVINVKKPQFMSPGQVGNIVEKFAECGNDKIILCERGSCHGYDNLVVDMLGFGVMKNASKGSPIIFDVTHSLQMRDPSGAASGGRREQTVELAKAGLATGIAGLFIEAHPNPDQARCDGPSALPLDKLEPFLAQMKSLDDLIKSFENIDIK.

Belongs to the KdsA family.

Its subcellular location is the cytoplasm. The catalysed reaction is D-arabinose 5-phosphate + phosphoenolpyruvate + H2O = 3-deoxy-alpha-D-manno-2-octulosonate-8-phosphate + phosphate. It participates in carbohydrate biosynthesis; 3-deoxy-D-manno-octulosonate biosynthesis; 3-deoxy-D-manno-octulosonate from D-ribulose 5-phosphate: step 2/3. The protein operates within bacterial outer membrane biogenesis; lipopolysaccharide biosynthesis. This chain is 2-dehydro-3-deoxyphosphooctonate aldolase, found in Vibrio parahaemolyticus serotype O3:K6 (strain RIMD 2210633).